A 295-amino-acid chain; its full sequence is Ankyrin repeat and SOCS box protein 17 (295 aa).

The stretch at 146–176 (SGITPLLYVAQTRQSNILKILLQYGILEREK) is one ANK repeat. An SOCS box domain is found at 243-295 (DYIPPTRYKDPCELVHLCRITIRTQLLANNMLPNGIFSLLIPTRLQNFLNLES).

The protein belongs to the ankyrin SOCS box (ASB) family. Specifically expressed in testis. Localizes to spermatogenic cells in testis, with highest expression in round spermatids and condensing spermatids and lower expression in pachytene spermatocytes.

The protein operates within protein modification; protein ubiquitination. Its function is as follows. May be a substrate-recognition component of a SCF-like ECS (Elongin-Cullin-SOCS-box protein) E3 ubiquitin-protein ligase complex which mediates the ubiquitination and subsequent proteasomal degradation of target proteins. This Mus musculus (Mouse) protein is Ankyrin repeat and SOCS box protein 17 (Asb17).